A 1080-amino-acid polypeptide reads, in one-letter code: Phycobiliprotein ApcE (1080 aa).

Residues 18–76 (QTLAVATITQAEQQDRFLGTGELNELATYFASGAKRLEIAQTLTENSEIIVSRAANRIF) form a phycobilin-like 1 region. The phycobilin-like loop stretch occupies residues 77-144 (VGGSPMSFLE…GPTPPGFRPI (68 aa)). Residues 145 to 237 (NVARYGPSNM…YMDVLLTEFK (93 aa)) are phycobilin-like 2. A (2R,3E)-phycocyanobilin-binding site is contributed by C195. 4 PBS-linker domains span residues 252–432 (DQQG…FRKV), 514–693 (LGPK…QKQE), 710–888 (PDIQ…KQND), and 922–1080 (STSA…SLGN). The tract at residues 906–930 (GTSSSGRNGFTDLGRSSTSAQGQLG) is disordered.

This sequence belongs to the phycobilisome linker protein family. Phycobilisomes of this organism are composed of a two cylinder core, from which six rods radiate. The core is mainly composed of allophycocyanin alpha and beta chains, and of three minor components: the allophycocyanin alpha-B chain, a 18.3 kDa polypeptide, and the anchor polypeptide L-CM. In terms of processing, contains one covalently linked bilin chromophore. This protein autochromophorylates.

The protein localises to the cellular thylakoid membrane. This protein is postulated to act both as terminal energy acceptor (by its phycobilin-like domains) and as a linker polypeptide (by its repeats and arms) that stabilizes the phycobilisome core architecture. Functionally, has intrinsic bilin lyase activity. The polypeptide is Phycobiliprotein ApcE (apcE) (Microchaete diplosiphon (Fremyella diplosiphon)).